A 102-amino-acid chain; its full sequence is Large ribosomal subunit protein bL21 (102 aa).

The protein belongs to the bacterial ribosomal protein bL21 family. In terms of assembly, part of the 50S ribosomal subunit. Contacts protein L20.

This protein binds to 23S rRNA in the presence of protein L20. The chain is Large ribosomal subunit protein bL21 from Bacillus velezensis (strain DSM 23117 / BGSC 10A6 / LMG 26770 / FZB42) (Bacillus amyloliquefaciens subsp. plantarum).